A 462-amino-acid polypeptide reads, in one-letter code: L-seryl-tRNA(Sec) selenium transferase (462 aa).

The residue at position 295 (lysine 295) is an N6-(pyridoxal phosphate)lysine.

This sequence belongs to the SelA family. As to quaternary structure, homodecamer; pentamer of dimers. Binds only one seryl-tRNA(Sec) per dimer. The cofactor is pyridoxal 5'-phosphate.

It localises to the cytoplasm. It catalyses the reaction L-seryl-tRNA(Sec) + selenophosphate + H(+) = L-selenocysteinyl-tRNA(Sec) + phosphate. The protein operates within aminoacyl-tRNA biosynthesis; selenocysteinyl-tRNA(Sec) biosynthesis; selenocysteinyl-tRNA(Sec) from L-seryl-tRNA(Sec) (bacterial route): step 1/1. In terms of biological role, converts seryl-tRNA(Sec) to selenocysteinyl-tRNA(Sec) required for selenoprotein biosynthesis. In Klebsiella pneumoniae subsp. pneumoniae (strain ATCC 700721 / MGH 78578), this protein is L-seryl-tRNA(Sec) selenium transferase.